The sequence spans 296 residues: 2-methylisocitrate lyase (296 aa).

Residue 45–47 (SGG) coordinates substrate. Positions 85 and 87 each coordinate Mg(2+). Residues 123 to 124 (CG), arginine 158, glutamate 188, 210 to 212 (NIT), arginine 241, and arginine 270 each bind substrate.

It belongs to the isocitrate lyase/PEP mutase superfamily. Methylisocitrate lyase family. As to quaternary structure, homotetramer; dimer of dimers. Requires Mg(2+) as cofactor.

The enzyme catalyses (2S,3R)-3-hydroxybutane-1,2,3-tricarboxylate = pyruvate + succinate. It functions in the pathway organic acid metabolism; propanoate degradation. Involved in the catabolism of short chain fatty acids (SCFA) via the 2-methylcitrate cycle I (propionate degradation route). Catalyzes the thermodynamically favored C-C bond cleavage of (2R,3S)-2-methylisocitrate to yield pyruvate and succinate via an alpha-carboxy-carbanion intermediate. This Escherichia coli (strain K12) protein is 2-methylisocitrate lyase.